Here is a 233-residue protein sequence, read N- to C-terminus: MREHRPVIALDFPSFEAVKEFLALFPAEESLYLKVGMELYYAAGPEIVSYLKGLGHSVFLDLKLHDIPNTVKSAMKVLSQLGVDMTNVHAAGGVEMMKAAREGLGSQAKLIAVTQLTSTSEAQMQEFQNIQTSLQESVIHYAKKTAEAGLDGVVCSAQEVQVIKQATNPDFICLTPGIRPAGAAVGDQKRVMTPADAYQIGSDYIVVGRPITQAEDPVAAYHTIKDEWTQDWN.

Residues Asp-11, Lys-34, 61 to 70, Thr-117, Arg-179, Gln-188, Gly-208, and Arg-209 contribute to the substrate site; that span reads DLKLHDIPNT. Lys-63 functions as the Proton donor in the catalytic mechanism.

It belongs to the OMP decarboxylase family. Type 1 subfamily. In terms of assembly, homodimer.

It catalyses the reaction orotidine 5'-phosphate + H(+) = UMP + CO2. It functions in the pathway pyrimidine metabolism; UMP biosynthesis via de novo pathway; UMP from orotate: step 2/2. Its function is as follows. Catalyzes the decarboxylation of orotidine 5'-monophosphate (OMP) to uridine 5'-monophosphate (UMP). In Streptococcus pneumoniae (strain JJA), this protein is Orotidine 5'-phosphate decarboxylase.